Here is a 76-residue protein sequence, read N- to C-terminus: VpAmp1.0 (76 aa).

The signal sequence occupies residues 1–22 (MKLINLVPVFFVLIIVVDYCHS). I41 carries the isoleucine amide modification. Positions 42 to 76 (GKRSVESQRYVDLNRRDLEQDLQELQDFLDQISEH) are excised as a propeptide.

The protein belongs to the non-disulfide-bridged peptide (NDBP) superfamily. Short antimicrobial peptide (group 4) family. Expressed by the venom gland.

The protein resides in the secreted. It is found in the target cell membrane. In terms of biological role, antimicrobial peptide with potent activity against Gram-positive bacteria S.aureus (MIC=2.5 uM) and S.agalactiaea (MIC=2.5 uM), and Gram-negative bacteria E.coli (MIC=24 uM) and P.aeruginosa (MIC=2.5 uM), as well as against yeasts Candida albicans (MIC=6.25 uM) and C.glabrata (MIC&gt;50 uM). Also elicits high hemolysis on human erythrocytes (HC(50)=9.2 uM). The chain is VpAmp1.0 from Mesomexovis punctatus (Scorpion).